Here is a 57-residue protein sequence, read N- to C-terminus: Cytochrome b-c1 complex subunit 10, mitochondrial (57 aa).

Topologically, residues 1 to 23 are mitochondrial matrix; the sequence is MAGTSGLLNAVKPKIQTIDIQAA. Residues 24–44 traverse the membrane as a helical segment; the sequence is AGWGIAAAAGAIWVVQPFGWI. The Mitochondrial intermembrane portion of the chain corresponds to 45 to 57; the sequence is KKTFIDPPPTEEK.

Belongs to the UQCR11/QCR10 family. As to quaternary structure, component of the ubiquinol-cytochrome c oxidoreductase (cytochrome b-c1 complex, complex III, CIII), a multisubunit enzyme composed of 10 subunits. The complex is composed of 3 respiratory subunits cytochrome b (MT-CYB), cytochrome c1 (CYC1-1 or CYC1-2) and Rieske protein (UCR1-1 or UCR1-2), 2 core protein subunits MPPalpha1 (or MPPalpha2) and MPPB, and 5 low-molecular weight protein subunits QCR7-1 (or QCR7-2), UCRQ-1 (or UCRQ-2), QCR9, UCRY and probably QCR6-1 (or QCR6-2). The complex exists as an obligatory dimer and forms supercomplexes (SCs) in the inner mitochondrial membrane with NADH-ubiquinone oxidoreductase (complex I, CI), resulting in different assemblies (supercomplexes SCI(1)III(2) and SCI(2)III(4)).

The protein resides in the mitochondrion inner membrane. Its function is as follows. Component of the ubiquinol-cytochrome c oxidoreductase, a multisubunit transmembrane complex that is part of the mitochondrial electron transport chain which drives oxidative phosphorylation. The respiratory chain contains 3 multisubunit complexes succinate dehydrogenase (complex II, CII), ubiquinol-cytochrome c oxidoreductase (cytochrome b-c1 complex, complex III, CIII) and cytochrome c oxidase (complex IV, CIV), that cooperate to transfer electrons derived from NADH and succinate to molecular oxygen, creating an electrochemical gradient over the inner membrane that drives transmembrane transport and the ATP synthase. The cytochrome b-c1 complex catalyzes electron transfer from ubiquinol to cytochrome c, linking this redox reaction to translocation of protons across the mitochondrial inner membrane, with protons being carried across the membrane as hydrogens on the quinol. In the process called Q cycle, 2 protons are consumed from the matrix, 4 protons are released into the intermembrane space and 2 electrons are passed to cytochrome c. In Arabidopsis thaliana (Mouse-ear cress), this protein is Cytochrome b-c1 complex subunit 10, mitochondrial (UCRY).